Reading from the N-terminus, the 128-residue chain is MPTIQQLVRDGRYTKSFKTASPALDRCPQKRGVCTRVYTTTPKKPNSALRKVARVRLSNGIEVTAYIPGEGHNLQEHSIVLIRGGRVKDLPGVRYHIVRGSLDTSGVADRRNGRSKYGAKRPKEGAKK.

Asp89 carries the post-translational modification 3-methylthioaspartic acid. A disordered region spans residues 101–128 (SLDTSGVADRRNGRSKYGAKRPKEGAKK).

Belongs to the universal ribosomal protein uS12 family. In terms of assembly, part of the 30S ribosomal subunit. Contacts proteins S8 and S17. May interact with IF1 in the 30S initiation complex.

Functionally, with S4 and S5 plays an important role in translational accuracy. Its function is as follows. Interacts with and stabilizes bases of the 16S rRNA that are involved in tRNA selection in the A site and with the mRNA backbone. Located at the interface of the 30S and 50S subunits, it traverses the body of the 30S subunit contacting proteins on the other side and probably holding the rRNA structure together. The combined cluster of proteins S8, S12 and S17 appears to hold together the shoulder and platform of the 30S subunit. The polypeptide is Small ribosomal subunit protein uS12 (Chloroherpeton thalassium (strain ATCC 35110 / GB-78)).